The following is a 509-amino-acid chain: Maturase K (509 aa).

The protein belongs to the intron maturase 2 family. MatK subfamily.

The protein localises to the plastid. The protein resides in the chloroplast. Functionally, usually encoded in the trnK tRNA gene intron. Probably assists in splicing its own and other chloroplast group II introns. This is Maturase K from Opuntia quimilo (Cactus).